A 399-amino-acid chain; its full sequence is Probable 2,3-bisphosphoglycerate-independent phosphoglycerate mutase (399 aa).

It belongs to the BPG-independent phosphoglycerate mutase family. A-PGAM subfamily.

It catalyses the reaction (2R)-2-phosphoglycerate = (2R)-3-phosphoglycerate. Its pathway is carbohydrate degradation; glycolysis; pyruvate from D-glyceraldehyde 3-phosphate: step 3/5. In terms of biological role, catalyzes the interconversion of 2-phosphoglycerate and 3-phosphoglycerate. This chain is Probable 2,3-bisphosphoglycerate-independent phosphoglycerate mutase, found in Geobacter sulfurreducens (strain ATCC 51573 / DSM 12127 / PCA).